The sequence spans 273 residues: Putative phosphoenolpyruvate synthase regulatory protein (273 aa).

153–160 contacts ADP; the sequence is GVSRSGKT.

The protein belongs to the pyruvate, phosphate/water dikinase regulatory protein family. PSRP subfamily.

The catalysed reaction is [pyruvate, water dikinase] + ADP = [pyruvate, water dikinase]-phosphate + AMP + H(+). It catalyses the reaction [pyruvate, water dikinase]-phosphate + phosphate + H(+) = [pyruvate, water dikinase] + diphosphate. Its function is as follows. Bifunctional serine/threonine kinase and phosphorylase involved in the regulation of the phosphoenolpyruvate synthase (PEPS) by catalyzing its phosphorylation/dephosphorylation. The polypeptide is Putative phosphoenolpyruvate synthase regulatory protein (Delftia acidovorans (strain DSM 14801 / SPH-1)).